Here is a 252-residue protein sequence, read N- to C-terminus: NAD-dependent protein deacetylase (252 aa).

A Deacetylase sirtuin-type domain is found at 2-243 (DSKRDEKILE…DRVVKELKKI (242 aa)). Residues A28, T32, F39, R40, Q109, I111, D112, and H127 each contribute to the NAD(+) site. F39 contacts nicotinamide. I111 and D112 together coordinate nicotinamide. H127 (proton acceptor) is an active-site residue. 4 residues coordinate Zn(2+): C135, C138, C148, and C150. Residues T188, S189, and N211 each coordinate NAD(+).

The protein belongs to the sirtuin family. Class U subfamily. Zn(2+) is required as a cofactor.

The protein localises to the cytoplasm. It carries out the reaction N(6)-acetyl-L-lysyl-[protein] + NAD(+) + H2O = 2''-O-acetyl-ADP-D-ribose + nicotinamide + L-lysyl-[protein]. NAD-dependent protein deacetylase which modulates the activities of several enzymes which are inactive in their acetylated form. The protein is NAD-dependent protein deacetylase of Fusobacterium nucleatum subsp. nucleatum (strain ATCC 25586 / DSM 15643 / BCRC 10681 / CIP 101130 / JCM 8532 / KCTC 2640 / LMG 13131 / VPI 4355).